The primary structure comprises 422 residues: Ena/VASP-like protein (422 aa).

The WH1 domain maps to 4–118; the sequence is FEEFSEQSIC…NAMLFALNIM (115 aa). Residues 120–135 show a composition bias toward polar residues; sequence SQEGGPSSQRQVQNGP. 2 disordered regions span residues 120-139 and 147-375; these read SQEG…SPDE and VMEQ…PAGS. Phosphoserine is present on Ser136. Residues 147–163 are compositionally biased toward basic and acidic residues; that stretch reads VMEQHQQQRQESLERRT. Residues 175 to 186 show a composition bias toward low complexity; sequence PSSAASAPVSCS. The span at 187–212 shows a compositional bias: pro residues; sequence GPPPPPPPPVPPPPTGATPPPPPPLP. The tract at residues 228–248 is EVH2 block A; the sequence is GLAAAIAGAKLRRVQRPEDAS. Residues 228 to 419 form an EVH2 region; that stretch reads GLAAAIAGAK…DAIRQELSGI (192 aa). The KLKR motif lies at 237-240; that stretch reads KLRR. The span at 248 to 259 shows a compositional bias: low complexity; the sequence is SGGSSPSGTSKS. Ser252 and Ser265 each carry phosphoserine. The segment at 271 to 288 is EVH2 block B; sequence GGLMEEMNKLLAKRRKAA. The segment covering 305-326 has biased composition (polar residues); sequence EDPSTSPSPGTRAASQPPNSSE. Phosphoserine occurs at positions 310, 312, 335, 337, 347, 355, 360, and 375. Residues 327–337 show a composition bias toward basic and acidic residues; that stretch reads AGRKPWERSNS. Residues 348–368 are required for interaction with ZDHHC17; the sequence is RTPSVAKSPEAKSPLQSQPHS. Positions 385–419 are EVH2 block C; sequence DLDRMKQEILEEVVRELHKVKDEIIDAIRQELSGI. The stretch at 388-414 forms a coiled coil; the sequence is RMKQEILEEVVRELHKVKDEIIDAIRQ.

The protein belongs to the Ena/VASP family. Homotetramer. Binds to the SH3 domains of ABL1, LYN and SRC. Also binds to profilin, with preference for isoform IIa of PFN2, and the WW domain of APBB1/FE65. Binds to SEMA6A. Interacts, via the Pro-rich region, with the C-terminal SH3 domain of DNMBP. Interacts with RAPH1. Binds, via the EVH1 domain, the Pro-rich domain of Listeria monocytogenes actA. Binds, via the EVH1 domain, the Pro-rich domain of ZYX. Interacts with FYB1. Interacts with ZDHHC17. Phosphorylated by PKA; phosphorylation abolishes binding to SH3 domains of ABL and SRC.

It is found in the cytoplasm. The protein localises to the cytoskeleton. Its subcellular location is the stress fiber. The protein resides in the cell projection. It localises to the lamellipodium. Ena/VASP proteins are actin-associated proteins involved in a range of processes dependent on cytoskeleton remodeling and cell polarity such as axon guidance and lamellipodial and filopodial dynamics in migrating cells. EVL enhances actin nucleation and polymerization. The protein is Ena/VASP-like protein (EVL) of Pongo abelii (Sumatran orangutan).